A 112-amino-acid polypeptide reads, in one-letter code: MATTIDQTSIKSLHFHQVIRLIITIIFLAFLFLIGPTSSMNHHLHESSSKNTMAPSKRFLLQPSTPSSSTMKMRPTAHPRRSGTSSSSARKRRREFRAEAHEVPSGPNPISN.

Positions 1–39 (MATTIDQTSIKSLHFHQVIRLIITIIFLAFLFLIGPTSS) are cleaved as a signal peptide. The segment at 41–112 (NHHLHESSSK…VPSGPNPISN (72 aa)) is disordered. Over residues 62–71 (QPSTPSSSTM) the composition is skewed to polar residues. Pro-104 and Pro-107 each carry hydroxyproline. O-linked (Ara...) hydroxyproline glycosylation occurs at Pro-107.

Belongs to the CLV3/ESR signal peptide family. Interacts specifically with the leucine-rich repeat receptor-like protein kinase TDR, especially in the presence of SERK2. Post-translationally, the O-glycosylation (arabinosylation) of the hydroxyproline Pro-107 enhances binding affinity of the CLE44p peptide for its receptor. As to expression, mostly expressed in flowers and leaves. Widely expressed along the vascular strands. In roots and hypocotyls, present in endodermal cells as well as cells in the phloem and the adjacent pericycle.

It is found in the secreted. The protein resides in the extracellular space. In terms of biological role, extracellular signal peptide that regulates cell fate. May act with TDR as a ligand-receptor pair in a signal transduction pathway that represses tracheary element differentiation but promotes the formation of procambial cells adjacent to phloem cells in the veins. Regulates the transition of protophloem cells from proliferation to differentiation, thus impinging on postembryonic growth capacity of the root meristem; this signaling pathway requires CRN and CLV2. The protein is CLAVATA3/ESR (CLE)-related protein 44 of Arabidopsis thaliana (Mouse-ear cress).